The chain runs to 424 residues: Tyrosine--tRNA ligase (424 aa).

Tyr37 is an L-tyrosine binding site. The 'HIGH' region signature appears at 42–51 (PTADSLHLGH). Lys144 is modified (N6-acetyllysine). L-tyrosine contacts are provided by Tyr175 and Gln179. The 'KMSKS' region signature appears at 235 to 239 (KFGKT). Lys238 contacts ATP. The S4 RNA-binding domain maps to 357 to 414 (ADLMQALVDSELQPSRGQARKTIASNAVTINGEKQSDPEYFFKEEDRLFGRFTLLRRG).

It belongs to the class-I aminoacyl-tRNA synthetase family. TyrS type 1 subfamily. Homodimer.

It localises to the cytoplasm. The catalysed reaction is tRNA(Tyr) + L-tyrosine + ATP = L-tyrosyl-tRNA(Tyr) + AMP + diphosphate + H(+). Its function is as follows. Catalyzes the attachment of tyrosine to tRNA(Tyr) in a two-step reaction: tyrosine is first activated by ATP to form Tyr-AMP and then transferred to the acceptor end of tRNA(Tyr). The sequence is that of Tyrosine--tRNA ligase from Escherichia fergusonii (strain ATCC 35469 / DSM 13698 / CCUG 18766 / IAM 14443 / JCM 21226 / LMG 7866 / NBRC 102419 / NCTC 12128 / CDC 0568-73).